Reading from the N-terminus, the 325-residue chain is tRNA N(3)-methylcytidine methyltransferase Mettl2 (325 aa).

2 residues coordinate S-adenosyl-L-methionine: tryptophan 96 and tyrosine 100. Residues tyrosine 100, histidine 112, glutamate 138, glycine 140, aspartate 165, aspartate 191, and isoleucine 212 each contribute to the S-adenosyl-L-homocysteine site. Residues glycine 140, aspartate 165, aspartate 191, and isoleucine 212 each coordinate S-adenosyl-L-methionine.

This sequence belongs to the methyltransferase superfamily. METL family. Interacts with Psn. Widely expressed. Expressed in ovaries, head, thorax and abdomen of adult flies, and in the CNS of third instar larvae. Isoform 2 is predominantly expressed in larvae and in adult tissues that have been tested.

Probable methyltransferase. This Drosophila melanogaster (Fruit fly) protein is tRNA N(3)-methylcytidine methyltransferase Mettl2.